Reading from the N-terminus, the 197-residue chain is MTPPGRLYLPLLLGLLLAPPPPGAQGLPGAEFPPSAARNAQQRLQKHFGHSTLKPAAHLVGDPSAQDSLRWRANTDRAFLRHGFSLSNNSLLVPSSGLYFVYSQVVFSGEGCSPKAVPTPLYLAHEVQLFSSQYSFHVPLLSAQKSVCPGPQGPWVRSVYQGAVFLLTQGDQLSTHTDGIAHLLLSPSSVFFGAFAL.

The signal sequence occupies residues 1-26; the sequence is MTPPGRLYLPLLLGLLLAPPPPGAQG. The THD domain occupies 55 to 197; that stretch reads PAAHLVGDPS…SSVFFGAFAL (143 aa). An N-linked (GlcNAc...) asparagine glycan is attached at Asn-88. A disulfide bond links Cys-112 and Cys-148.

This sequence belongs to the tumor necrosis factor family. In terms of assembly, homotrimer, and heterotrimer of either two LTB and one LTA subunits or (less prevalent) two LTA and one LTB subunits. Interacts with TNFRSF14.

The protein resides in the secreted. It localises to the membrane. Its function is as follows. Cytokine that in its homotrimeric form binds to TNFRSF1A/TNFR1, TNFRSF1B/TNFBR and TNFRSF14/HVEM. In its heterotrimeric form with LTB binds to TNFRSF3/LTBR. Lymphotoxin is produced by lymphocytes and is cytotoxic for a wide range of tumor cells in vitro and in vivo. This is Lymphotoxin-alpha (LTA) from Oryctolagus cuniculus (Rabbit).